Reading from the N-terminus, the 335-residue chain is Proline-rich protein 1 (335 aa).

The signal sequence occupies residues 1 to 22; it reads MAITRASFAICILLSLATIATA. Repeat copies occupy residues 30–34, 35–39, 40–43, 44–48, 49–53, 54–57, 58–62, 63–67, 68–71, 72–76, 77–81, 82–86, 87–91, 92–96, 97–101, 102–106, 107–110, 111–115, 116–120, 121–125, 126–130, 131–135, 136–139, 140–144, 145–148, 149–153, 154–158, 159–163, 164–167, 168–172, 173–177, 178–182, 184–189, 190–194, 195–200, 201–207, 208–212, 284–288, and 319–323. The interval 30 to 323 is 39 X 5 AA approximate repeats; that stretch reads PPVYTSPVNK…LFNVGPFYFT (294 aa).

This sequence belongs to the plant proline-rich protein superfamily. ENOD12 family. In terms of tissue distribution, exclusively expressed in roots, especially in root hairs.

Its subcellular location is the secreted. It is found in the cell wall. Its function is as follows. May contribute to cell wall structure in root hairs. The chain is Proline-rich protein 1 (PRP1) from Arabidopsis thaliana (Mouse-ear cress).